The following is a 962-amino-acid chain: Splicing regulator ARVCF (962 aa).

Residues 11–46 (SILASVKEQEARFERLTRALEQERRHVALQLERAQQ) are a coiled coil. Residues 95 to 123 (VTVEEDPGTPTSHVSIVTSEDGTTRRTET) are disordered. Phosphothreonine occurs at positions 103 and 105. Over residues 103-115 (TPTSHVSIVTSED) the composition is skewed to polar residues. Residue Arg171 is modified to Omega-N-methylarginine. Disordered regions lie at residues 233–255 (GRRE…LPEH), 268–291 (RSLA…TRRR), and 322–357 (AATA…EPRW). A Phosphoserine modification is found at Ser269. The span at 272–282 (ADDEGGPDLEP) shows a compositional bias: acidic residues. Ser334, Ser337, Ser345, and Ser347 each carry phosphoserine. 6 ARM repeats span residues 350–389 (STRK…HLCF), 392–431 (EGIK…NLSY), 435–469 (TDNK…VTGT), 470–510 (LWNL…NEDS), 528–567 (LRNV…DTDN), and 577–623 (MRNL…GKKA). The disordered stretch occupies residues 593–618 (RYQEAEPGIPGSTTSQRRRKDDASCF). Ser607 is modified (phosphoserine). A Nuclear localization signal motif is present at residues 608–624 (QRRRKDDASCFGGKKAK). Thr643 is subject to Phosphothreonine. 4 ARM repeats span residues 647 to 687 (PKRT…AAGA), 700 to 739 (TYIR…NLSL), 740 to 782 (DQRN…AVLN), and 783 to 827 (TIHE…SHVL). The segment at 777 to 962 (VVAVLNTIHE…TKPQPVDSWV (186 aa)) is required for interaction with RNA-binding proteins DDX5, HNRNPH2 and SRSF1 and with mRNAs. A disordered region spans residues 844 to 962 (GWTKSRFQSA…TKPQPVDSWV (119 aa)). A phosphoserine mark is found at Ser864 and Ser871. Position 872 is a phosphothreonine (Thr872). Basic and acidic residues-rich tracts occupy residues 878–887 (KSLDGEKSNT) and 920–932 (TSEK…DPGR).

The protein belongs to the beta-catenin family. As to quaternary structure, component of a ribonucleoprotein complex containing mRNAs and RNA-binding proteins including DDX5, HNRNPH2 and SRSF1 as well as ARVCF. Interacts (via the extreme C-terminus) with FRMPD2 (via the PDZ 2 domain). Interacts with CCDC85B.

It is found in the cell junction. Its subcellular location is the adherens junction. It localises to the nucleus. The protein localises to the cytoplasm. Its function is as follows. Contributes to the regulation of alternative splicing of pre-mRNAs. The protein is Splicing regulator ARVCF (Arvcf) of Mus musculus (Mouse).